The following is a 548-amino-acid chain: Chaperonin GroEL (548 aa).

Residues T30–P33, K51, D87–T91, G415, N479–A481, and D495 each bind ATP.

This sequence belongs to the chaperonin (HSP60) family. As to quaternary structure, forms a cylinder of 14 subunits composed of two heptameric rings stacked back-to-back. Interacts with the co-chaperonin GroES.

The protein resides in the cytoplasm. It catalyses the reaction ATP + H2O + a folded polypeptide = ADP + phosphate + an unfolded polypeptide.. Its function is as follows. Together with its co-chaperonin GroES, plays an essential role in assisting protein folding. The GroEL-GroES system forms a nano-cage that allows encapsulation of the non-native substrate proteins and provides a physical environment optimized to promote and accelerate protein folding. The protein is Chaperonin GroEL of Lawsonia intracellularis (strain PHE/MN1-00).